A 587-amino-acid chain; its full sequence is ATP-dependent lipid A-core flippase (587 aa).

Helical transmembrane passes span 31–51 (LIASGIALVFNALADSGLIYL), 68–88 (LKIMAFVVVGMIILRGVTNFI), 145–165 (GSLITIVREGAYIISLLAVMF), 169–189 (WELTLVLFVIGPIIAVLITIV), and 259–279 (VQIIASLALVAVLFLATTPLI). Residues 32 to 315 (IASGIALVFN…LTNVNSQFQR (284 aa)) form the ABC transmembrane type-1 domain. In terms of domain architecture, ABC transporter spans 347–583 (LEFKNVSFAY…NGAYKQLYSM (237 aa)). 381-388 (GRSGSGKS) is a binding site for ATP.

This sequence belongs to the ABC transporter superfamily. Lipid exporter (TC 3.A.1.106) family. As to quaternary structure, homodimer.

Its subcellular location is the cell inner membrane. The enzyme catalyses ATP + H2O + lipid A-core oligosaccharideSide 1 = ADP + phosphate + lipid A-core oligosaccharideSide 2.. In terms of biological role, involved in lipopolysaccharide (LPS) biosynthesis. Translocates lipid A-core from the inner to the outer leaflet of the inner membrane. Transmembrane domains (TMD) form a pore in the inner membrane and the ATP-binding domain (NBD) is responsible for energy generation. The sequence is that of ATP-dependent lipid A-core flippase from Haemophilus influenzae (strain 86-028NP).